Here is a 330-residue protein sequence, read N- to C-terminus: Olfactory receptor 1P1 (330 aa).

Residues 1–39 (MGLTQDFFPPTSELLEGGNQTSTFEFLLWGLSDQPQQQH) are Extracellular-facing. N-linked (GlcNAc...) asparagine glycosylation is present at N19. A helical transmembrane segment spans residues 40-60 (IFFLLFLWMYVVTVAGNLLIV). Residues 61 to 71 (LAIGTDTHLHT) lie on the Cytoplasmic side of the membrane. The chain crosses the membrane as a helical span at residues 72–92 (PMYFFLASLSCADIFSTSTTV). At 93-111 (PKALVNIQTQSRSISYAGC) the chain is on the extracellular side. Residues C111 and C192 are joined by a disulfide bond. A helical membrane pass occupies residues 112–132 (LAQLYFFLTFGDMDIFLPATM). Residues 133–137 (AYDRY) lie on the Cytoplasmic side of the membrane. A helical transmembrane segment spans residues 138–158 (VAICHLLHYMMIMSLHRCAFL). Over 159–209 (VTACWTLTSLLAMTRTFLIFRLSLCSKILPGFFCDLGPLMKVSCSDAQVNE) the chain is Extracellular. The chain crosses the membrane as a helical span at residues 210 to 230 (LVLLFLGGAVILIPFMLILVS). Residues 231 to 257 (YIRIVSAILRAPSAQGRRKAFSTCDSH) are Cytoplasmic-facing. A helical membrane pass occupies residues 258 to 278 (LVVVALFFGTVIRAYLCPSSS). At 279–286 (SSNSVKED) the chain is on the extracellular side. The helical transmembrane segment at 287 to 307 (TAAAVMYTVVTPLLNPFIYSM) threads the bilayer. Topologically, residues 308 to 330 (RNKDMKAAVVRLLKGRVSFSQGQ) are cytoplasmic.

This sequence belongs to the G-protein coupled receptor 1 family.

The protein localises to the cell membrane. In terms of biological role, odorant receptor. The polypeptide is Olfactory receptor 1P1 (OR1P1) (Homo sapiens (Human)).